Reading from the N-terminus, the 453-residue chain is tRNA modification GTPase MnmE (453 aa).

(6S)-5-formyl-5,6,7,8-tetrahydrofolate contacts are provided by R22, E79, and K119. Residues G215 to G376 enclose the TrmE-type G domain. N225 is a K(+) binding site. GTP is bound by residues N225–S230, T244–T250, D269–G272, and N334–D337. S229 lines the Mg(2+) pocket. 3 residues coordinate K(+): T244, I246, and T249. T250 provides a ligand contact to Mg(2+). Residue K453 participates in (6S)-5-formyl-5,6,7,8-tetrahydrofolate binding.

This sequence belongs to the TRAFAC class TrmE-Era-EngA-EngB-Septin-like GTPase superfamily. TrmE GTPase family. As to quaternary structure, homodimer. Heterotetramer of two MnmE and two MnmG subunits. Requires K(+) as cofactor.

Its subcellular location is the cytoplasm. Its function is as follows. Exhibits a very high intrinsic GTPase hydrolysis rate. Involved in the addition of a carboxymethylaminomethyl (cmnm) group at the wobble position (U34) of certain tRNAs, forming tRNA-cmnm(5)s(2)U34. The polypeptide is tRNA modification GTPase MnmE (Shewanella sp. (strain W3-18-1)).